The primary structure comprises 219 residues: Large ribosomal subunit protein uL29m (219 aa).

Residues Ala-77–Thr-97 form a disordered region. Residues Ser-87–Thr-97 show a composition bias toward basic and acidic residues.

It belongs to the universal ribosomal protein uL29 family. In terms of assembly, component of the mitochondrial large ribosomal subunit. Mature mitochondrial ribosomes consist of a small (37S) and a large (54S) subunit. The 37S subunit contains at least 33 different proteins and 1 molecule of RNA (15S). The 54S subunit contains at least 45 different proteins and 1 molecule of RNA (21S).

The protein resides in the mitochondrion. The polypeptide is Large ribosomal subunit protein uL29m (mrpl4) (Emericella nidulans (strain FGSC A4 / ATCC 38163 / CBS 112.46 / NRRL 194 / M139) (Aspergillus nidulans)).